The chain runs to 286 residues: Probable endonuclease 4 (286 aa).

Positions 67, 107, 144, 178, 181, 215, 228, 230, and 260 each coordinate Zn(2+).

This sequence belongs to the AP endonuclease 2 family. Zn(2+) is required as a cofactor.

It catalyses the reaction Endonucleolytic cleavage to 5'-phosphooligonucleotide end-products.. Its function is as follows. Endonuclease IV plays a role in DNA repair. It cleaves phosphodiester bonds at apurinic or apyrimidinic (AP) sites, generating a 3'-hydroxyl group and a 5'-terminal sugar phosphate. The chain is Probable endonuclease 4 from Chloroflexus aggregans (strain MD-66 / DSM 9485).